Consider the following 88-residue polypeptide: Long neurotoxin LNTX-1 (88 aa).

An N-terminal signal peptide occupies residues 1–21 (MKTLLLTLVVVTIVCLDFGYA). Intrachain disulfides connect Cys24–Cys42, Cys35–Cys63, Cys48–Cys52, Cys67–Cys78, and Cys79–Cys84.

The protein belongs to the three-finger toxin family. Long-chain subfamily. Type II alpha-neurotoxin sub-subfamily. As to expression, expressed by the venom gland.

The protein resides in the secreted. Functionally, binds with high affinity to muscular (alpha-1/CHRNA1) and neuronal (alpha-7/CHRNA7) nicotinic acetylcholine receptor (nAChR) and inhibits acetylcholine from binding to the receptor, thereby impairing neuromuscular and neuronal transmission. The sequence is that of Long neurotoxin LNTX-1 from Demansia vestigiata (Lesser black whip snake).